The following is a 233-amino-acid chain: 7-cyano-7-deazaguanine synthase (233 aa).

13-23 contacts ATP; the sequence is LSGGLDSTTCL. Zn(2+)-binding residues include Cys-197, Cys-206, Cys-209, and Cys-212.

The protein belongs to the QueC family. Requires Zn(2+) as cofactor.

The catalysed reaction is 7-carboxy-7-deazaguanine + NH4(+) + ATP = 7-cyano-7-deazaguanine + ADP + phosphate + H2O + H(+). Its pathway is purine metabolism; 7-cyano-7-deazaguanine biosynthesis. Functionally, catalyzes the ATP-dependent conversion of 7-carboxy-7-deazaguanine (CDG) to 7-cyano-7-deazaguanine (preQ(0)). The chain is 7-cyano-7-deazaguanine synthase from Anaeromyxobacter sp. (strain Fw109-5).